The sequence spans 448 residues: MAAPTLGRLVLTHLLVALFGMGSWAAVNGIWVELPVVVKDLPEGWSLPSYLSVVVALGNLGLLVVTLWRQLAPGKGEQVPIQVVQVLSVVGTALLAPLWHHVAPVAGQLHSVAFLTLALVLAMACCTSNVTFLPFLSHLPPPFLRSFFLGQGLSALLPCVLALVQGVGRLECPPAPTNGTSGPPLDFPERFPASTFFWALTALLVTSAAAFRGLLLLLPSLPSVTTGGSGPELQLGSPGAEEEEKEEEEALPLQEPPSQAAGTIPGPDPEAHQLFSAHGAFLLGLMAFTSAVTNGVLPSVQSFSCLPYGRLAYHLAVVLGSAANPLACFLAMGVLCRSLAGLVGLSLLGMLFGAYLMALAILSPCPPLVGTTAGVVLVVLSWVLCLCVFSYVKVAASSLLHGGGRPALLAAGVAIQVGSLLGAGAMFPPTSIYHVFQSRKDCVDPCGP.

Transmembrane regions (helical) follow at residues 14–34, 47–67, 79–99, 124–144, and 147–167; these read LLVA…WVEL, LPSY…VVTL, VPIQ…APLW, ACCT…PPFL, and FFLG…VQGV. Residue Asn178 is glycosylated (N-linked (GlcNAc...) asparagine). The chain crosses the membrane as a helical span at residues 191–211; that stretch reads FPASTFFWALTALLVTSAAAF. The disordered stretch occupies residues 225-267; that stretch reads TTGGSGPELQLGSPGAEEEEKEEEEALPLQEPPSQAAGTIPGP. The segment covering 240-250 has biased composition (acidic residues); the sequence is AEEEEKEEEEA. The next 5 membrane-spanning stretches (helical) occupy residues 280 to 300, 315 to 335, 342 to 362, 369 to 389, and 407 to 427; these read AFLL…LPSV, LAVV…MGVL, LVGL…LAIL, VGTT…LCVF, and ALLA…GAMF.

This sequence belongs to the riboflavin transporter family. As to expression, widely expressed. Highly expressed in the testis, placenta and small intestine. Expressed at lower level in other tissues.

It localises to the cell membrane. It catalyses the reaction riboflavin(in) = riboflavin(out). Its activity is regulated as follows. The activity is strongly inhibited by riboflavin analogs, such as lumiflavin. Weakly inhibited by flavin adenine dinucleotide (FAD). Its function is as follows. Plasma membrane transporter mediating the uptake by cells of the water soluble vitamin B2/riboflavin that plays a key role in biochemical oxidation-reduction reactions of the carbohydrate, lipid, and amino acid metabolism. Humans are unable to synthesize vitamin B2/riboflavin and must obtain it via intestinal absorption. (Microbial infection) May function as a cell receptor to retroviral envelopes similar to the porcine endogenous retrovirus (PERV-A). The protein is Solute carrier family 52, riboflavin transporter, member 1 of Homo sapiens (Human).